The following is a 298-amino-acid chain: Cyclin-dependent kinase 2 (298 aa).

At methionine 1 the chain carries N-acetylmethionine. In terms of domain architecture, Protein kinase spans 4–286 (FQKVEKIGEG…AKAALAHPFF (283 aa)). Lysine 6 bears the N6-acetyllysine mark. Position 10–18 (10–18 (IGEGTYGVV)) interacts with ATP. Threonine 14 is subject to Phosphothreonine. The residue at position 15 (tyrosine 15) is a Phosphotyrosine; by WEE1. Tyrosine 19 is modified (phosphotyrosine). ATP contacts are provided by residues lysine 33, 81 to 83 (EFL), and aspartate 86. Aspartate 127 (proton acceptor) is an active-site residue. ATP contacts are provided by residues 129–132 (KPQN) and aspartate 145. The Mg(2+) site is built by asparagine 132 and aspartate 145. A Phosphothreonine; by CAK and CCRK modification is found at threonine 160.

Belongs to the protein kinase superfamily. CMGC Ser/Thr protein kinase family. CDC2/CDKX subfamily. As to quaternary structure, found in a complex with CABLES1, CCNA1 and CCNE1. Interacts with CABLES1. Interacts with UHRF2. Part of a complex consisting of UHRF2, CDK2 and CCNE1. Interacts with the Speedy/Ringo proteins SPDYA and SPDYC. Interaction with SPDYA promotes kinase activation via a conformation change that alleviates obstruction of the substrate-binding cleft by the T-loop. Found in a complex with both SPDYA and CDKN1B/KIP1. Binds to RB1. Binds to CDK7. Binding to CDKN1A (p21) leads to CDK2/cyclin E inactivation at the G1-S phase DNA damage checkpoint, thereby arresting cells at the G1-S transition during DNA repair. Associated with PTPN6 and beta-catenin/CTNNB1. Interacts with CACUL1. May interact with CEP63. Interacts with ANKRD17. Interacts with CEBPA (when phosphorylated). Forms a ternary complex with CCNA2 and CDKN1B; CDKN1B inhibits the kinase activity of CDK2 through conformational rearrangements. Interacts with cyclins A, B1, B3, D, or E. Interacts with CDK2AP2. Requires Mg(2+) as cofactor. In terms of processing, phosphorylated at Thr-160 by CDK7 in a CAK complex. Phosphorylation at Thr-160 promotes kinase activity, whereas phosphorylation at Tyr-15 by WEE1 reduces slightly kinase activity. Phosphorylated on Thr-14 and Tyr-15 during S and G2 phases before being dephosphorylated by CDC25A. Post-translationally, nitrosylated after treatment with nitric oxide (DETA-NO).

It is found in the cytoplasm. Its subcellular location is the cytoskeleton. It localises to the microtubule organizing center. The protein resides in the centrosome. The protein localises to the nucleus. It is found in the cajal body. Its subcellular location is the endosome. It carries out the reaction L-seryl-[protein] + ATP = O-phospho-L-seryl-[protein] + ADP + H(+). The enzyme catalyses L-threonyl-[protein] + ATP = O-phospho-L-threonyl-[protein] + ADP + H(+). Its activity is regulated as follows. Phosphorylation at Thr-14 or Tyr-15 inactivates the enzyme, while phosphorylation at Thr-160 activates it. Stimulated by MYC. Inactivated by CDKN1A (p21). Its function is as follows. Serine/threonine-protein kinase involved in the control of the cell cycle; essential for meiosis, but dispensable for mitosis. Phosphorylates CABLES1, CTNNB1, CDK2AP2, ERCC6, NBN, USP37, p53/TP53, NPM1, CDK7, RB1, BRCA2, MYC, NPAT, EZH2. Triggers duplication of centrosomes and DNA. Acts at the G1-S transition to promote the E2F transcriptional program and the initiation of DNA synthesis, and modulates G2 progression; controls the timing of entry into mitosis/meiosis by controlling the subsequent activation of cyclin B/CDK1 by phosphorylation, and coordinates the activation of cyclin B/CDK1 at the centrosome and in the nucleus. Crucial role in orchestrating a fine balance between cellular proliferation, cell death, and DNA repair in embryonic stem cells (ESCs). Activity of CDK2 is maximal during S phase and G2; activated by interaction with cyclin E during the early stages of DNA synthesis to permit G1-S transition, and subsequently activated by cyclin A2 (cyclin A1 in germ cells) during the late stages of DNA replication to drive the transition from S phase to mitosis, the G2 phase. EZH2 phosphorylation promotes H3K27me3 maintenance and epigenetic gene silencing. Cyclin E/CDK2 prevents oxidative stress-mediated Ras-induced senescence by phosphorylating MYC. Involved in G1-S phase DNA damage checkpoint that prevents cells with damaged DNA from initiating mitosis; regulates homologous recombination-dependent repair by phosphorylating BRCA2, this phosphorylation is low in S phase when recombination is active, but increases as cells progress towards mitosis. In response to DNA damage, double-strand break repair by homologous recombination a reduction of CDK2-mediated BRCA2 phosphorylation. Involved in regulation of telomere repair by mediating phosphorylation of NBN. Phosphorylation of RB1 disturbs its interaction with E2F1. NPM1 phosphorylation by cyclin E/CDK2 promotes its dissociation from unduplicated centrosomes, thus initiating centrosome duplication. Cyclin E/CDK2-mediated phosphorylation of NPAT at G1-S transition and until prophase stimulates the NPAT-mediated activation of histone gene transcription during S phase. Required for vitamin D-mediated growth inhibition by being itself inactivated. Involved in the nitric oxide- (NO) mediated signaling in a nitrosylation/activation-dependent manner. USP37 is activated by phosphorylation and thus triggers G1-S transition. CTNNB1 phosphorylation regulates insulin internalization. Phosphorylates FOXP3 and negatively regulates its transcriptional activity and protein stability. Phosphorylates ERCC6 which is essential for its chromatin remodeling activity at DNA double-strand breaks. Acts as a regulator of the phosphatidylinositol 3-kinase/protein kinase B signal transduction by mediating phosphorylation of the C-terminus of protein kinase B (PKB/AKT1 and PKB/AKT2), promoting its activation. In Rattus norvegicus (Rat), this protein is Cyclin-dependent kinase 2 (Cdk2).